The primary structure comprises 236 residues: Dolichol-phosphate mannosyltransferase (236 aa).

Positions 9, 11, 13, 40, 42, 95, 96, 97, 124, 160, 211, and 217 each coordinate GDP-alpha-D-mannose. D97 is a binding site for Mg(2+). D97 lines the Mn(2+) pocket.

This sequence belongs to the glycosyltransferase 2 family. In terms of assembly, component of the dolichol-phosphate mannose (DPM) synthase complex composed of dpm1, dpm2 and dpm3. Mg(2+) serves as cofactor. Mn(2+) is required as a cofactor. The cofactor is Ca(2+).

It is found in the endoplasmic reticulum. The catalysed reaction is a di-trans,poly-cis-dolichyl phosphate + GDP-alpha-D-mannose = a di-trans,poly-cis-dolichyl beta-D-mannosyl phosphate + GDP. Its pathway is protein modification; protein glycosylation. In terms of biological role, transfers mannose from GDP-mannose to dolichol monophosphate to form dolichol phosphate mannose (Dol-P-Man) which is the mannosyl donor in pathways leading to N-glycosylation, glycosyl phosphatidylinositol membrane anchoring, and O-mannosylation of proteins. The protein is Dolichol-phosphate mannosyltransferase of Schizosaccharomyces pombe (strain 972 / ATCC 24843) (Fission yeast).